Here is a 110-residue protein sequence, read N- to C-terminus: uncharacterized protein (110 aa).

The next 3 helical transmembrane spans lie at 4 to 26 (LVGGGLMIIAGILIKLFPPKSIN), 46 to 68 (ANRYSASLMILSGLVIAGMGLLL), and 72 to 91 (LFILQLILLIAACVITFMLT).

The protein resides in the cell membrane. This is an uncharacterized protein from Bacillus subtilis (strain 168).